The following is a 131-amino-acid chain: UPF0382 inner membrane protein YgdD (131 aa).

Topologically, residues 1–4 (MTSR) are periplasmic. A helical membrane pass occupies residues 5 to 25 (FMLIFAAISGFIFVALGAFGA). Residues 26–64 (HVLSKTMGAVEMGWIQTGLEYQAFHTLAILGLAVAMQRR) lie on the Cytoplasmic side of the membrane. Residues 65-85 (ISIWFYWSSVFLALGTVLFSG) traverse the membrane as a helical segment. Topologically, residues 86–97 (SLYCLALSHLRL) are periplasmic. A helical membrane pass occupies residues 98 to 118 (WAFVTPVGGVSFLAGWALMLV). Topologically, residues 119-131 (GAIRLKRKGVSHE) are cytoplasmic.

It belongs to the UPF0382 family.

The protein resides in the cell inner membrane. In Escherichia coli O157:H7, this protein is UPF0382 inner membrane protein YgdD (ygdD).